A 355-amino-acid polypeptide reads, in one-letter code: Chromatin modification-related protein EAF3 (355 aa).

Residues 3–77 (EVGGKCLAYH…WDEWVSVDRI (75 aa)) enclose the Tudor-knot domain. The segment at 98 to 150 (ASLAQQQKTKNGGSAKRGGGGAHSESNHGGRRSGSGDRRDSNAEERGIVPSEG) is disordered. Positions 131 to 144 (GSGDRRDSNAEERG) are enriched in basic and acidic residues. The 191-residue stretch at 163 to 353 (SRNKLRIHIP…TSSQYEGVAL (191 aa)) folds into the MRG domain.

Belongs to the MRG family. As to quaternary structure, component of the NuA4 histone acetyltransferase complex.

The protein resides in the nucleus. Involved in deacetylation of histones, chromatin assembly and chromosome segregation. May act as a transcriptional oscillator, directing histone deacetylases to specific chromosomal domains. Component of the NuA4 histone acetyltransferase complex which is involved in transcriptional activation of selected genes principally by acetylation of nucleosomal histone H4 and H2A. The NuA4 complex is also involved in DNA repair. The protein is Chromatin modification-related protein EAF3 (EAF3) of Candida glabrata (strain ATCC 2001 / BCRC 20586 / JCM 3761 / NBRC 0622 / NRRL Y-65 / CBS 138) (Yeast).